The sequence spans 702 residues: Phosphate acetyltransferase (702 aa).

Residues 375–702 (AFRYELIQRA…QATQSAADCG (328 aa)) form a phosphate acetyltransferase region.

It in the N-terminal section; belongs to the CobB/CobQ family. In the C-terminal section; belongs to the phosphate acetyltransferase and butyryltransferase family. In terms of assembly, homohexamer.

Its subcellular location is the cytoplasm. The catalysed reaction is acetyl-CoA + phosphate = acetyl phosphate + CoA. It functions in the pathway metabolic intermediate biosynthesis; acetyl-CoA biosynthesis; acetyl-CoA from acetate: step 2/2. Its function is as follows. Involved in acetate metabolism. The sequence is that of Phosphate acetyltransferase (pta) from Deinococcus radiodurans (strain ATCC 13939 / DSM 20539 / JCM 16871 / CCUG 27074 / LMG 4051 / NBRC 15346 / NCIMB 9279 / VKM B-1422 / R1).